The primary structure comprises 263 residues: Lens fiber major intrinsic protein (263 aa).

Residues 1–9 are Cytoplasmic-facing; it reads MWELRSASF. The helical transmembrane segment at 10 to 29 threads the bilayer; it reads WRAICAEFFASLFYVFFGLG. At 30–41 the chain is on the extracellular side; that stretch reads ASLRWAPGPLHV. The chain crosses the membrane as a helical span at residues 42-59; the sequence is LQVALAFGLALATLVQAV. Topologically, residues 60–61 are cytoplasmic; the sequence is GH. Positions 62–77 form an intramembrane region, discontinuously helical; it reads ISGAHVNPAVTFAFLV. The short motif at 68 to 70 is the NPA 1 element; sequence NPA. Residues 78 to 82 are Cytoplasmic-facing; it reads GSQMS. Residues 83–106 form a helical membrane-spanning segment; sequence LLRAICYMVAQLLGAVAGAAVLYS. Residues 107–127 are Extracellular-facing; that stretch reads VTPPAVRGNLALNTLHPGVSV. A helical membrane pass occupies residues 128-148; sequence GQATIVEIFLTLQFVLCIFAT. Over 149 to 156 the chain is Cytoplasmic; it reads YDERRNGR. A helical transmembrane segment spans residues 157–175; it reads LGSVALAVGFSLTLGHLFG. Topologically, residues 176 to 178 are extracellular; sequence MYY. Positions 179–193 form an intramembrane region, discontinuously helical; sequence TGAGMNPARSFAPAI. Residues 184-186 carry the NPA 2 motif; it reads NPA. The Extracellular portion of the chain corresponds to 194 to 200; it reads LTRNFTN. A helical transmembrane segment spans residues 201-222; that stretch reads HWVYWVGPVIGAGLGSLLYDFL. The Cytoplasmic portion of the chain corresponds to 223–263; it reads LFPRLKSVSERLSILKGSRPSESNGQPEVTGEPVELKTQAL. Residues 227-237 form an interaction with CALM region; the sequence is LKSVSERLSIL. At serine 235 the chain carries Phosphoserine. The tract at residues 239–263 is disordered; the sequence is GSRPSESNGQPEVTGEPVELKTQAL. Serine 243 bears the Phosphoserine; by PKA mark. Serine 245 bears the Phosphoserine mark. Residue asparagine 246 is modified to Deamidated asparagine.

This sequence belongs to the MIP/aquaporin (TC 1.A.8) family. As to quaternary structure, homotetramer; each monomer provides an independent water pore. Two homotetramers on opposing membranes can dimerize, forming a cell-cell junction. Interacts with CALM; the calcium-calmodulin/CALM complex interacts with the cytoplasmic domains of two aquaporins, leading to channel closure. Interacts with BFSP1 (via C-terminus); prevents calcium-dependent inhibition of the water channel activity. In terms of processing, fatty acylated at Met-1 and Lys-238. The acyl modifications, in decreasing order of ion abundance, are: oleoyl (C18:1) &gt; palmitoyl (C16:0) &gt; stearoyl (C18:0) &gt; eicosenoyl (C20:1) &gt; dihomo-gamma-linolenoyl (C20:3) &gt; palmitoleoyl (C16:1) &gt; eicosadienoyl (C20:2). Subject to partial proteolytic cleavage in the eye lens core. Partial proteolysis promotes interactions between tetramers from adjoining membranes. As to expression, major component of lens fiber junctions.

The protein localises to the cell membrane. Its subcellular location is the cell junction. It catalyses the reaction H2O(in) = H2O(out). Its activity is regulated as follows. The water channel activity is inhibited by calcium through calmodulin/CALM. In terms of biological role, aquaporins form homotetrameric transmembrane channels, with each monomer independently mediating water transport across the plasma membrane along its osmotic gradient. Specifically expressed in lens fiber cells, this aquaporin is crucial for maintaining lens water homeostasis and transparency. Beyond water permeability, it also acts as a cell-to-cell adhesion molecule, forming thin junctions between lens fiber cells that are essential for maintaining the ordered structure and transparency of the lens. The polypeptide is Lens fiber major intrinsic protein (Bos taurus (Bovine)).